A 40-amino-acid chain; its full sequence is Photosystem II reaction center protein J (40 aa).

A helical transmembrane segment spans residues 8–28 (IPLWIIGTVTGIIVIGLIGIF).

It belongs to the PsbJ family. PSII is composed of 1 copy each of membrane proteins PsbA, PsbB, PsbC, PsbD, PsbE, PsbF, PsbH, PsbI, PsbJ, PsbK, PsbL, PsbM, PsbT, PsbX, PsbY, PsbZ, Psb30/Ycf12, at least 3 peripheral proteins of the oxygen-evolving complex and a large number of cofactors. It forms dimeric complexes.

The protein localises to the plastid. It is found in the chloroplast thylakoid membrane. Its function is as follows. One of the components of the core complex of photosystem II (PSII). PSII is a light-driven water:plastoquinone oxidoreductase that uses light energy to abstract electrons from H(2)O, generating O(2) and a proton gradient subsequently used for ATP formation. It consists of a core antenna complex that captures photons, and an electron transfer chain that converts photonic excitation into a charge separation. The sequence is that of Photosystem II reaction center protein J from Morus indica (Mulberry).